The chain runs to 137 residues: Methylmalonyl-CoA decarboxylase subunit delta (137 aa).

The helical transmembrane segment at 30 to 50 (VTVVLGMGITVVALIFLMYII) threads the bilayer.

Belongs to the OadG family. As to quaternary structure, the methylmalonyl-CoA decarboxylase is composed of four subunits: the carboxyltransferase alpha subunit (MmdA), the tunnel beta subunit (MmdB), the biotin-containing gamma subunit (MmdC) and the delta subunit (MmdD).

The protein localises to the cell membrane. The enzyme catalyses (S)-methylmalonyl-CoA + Na(+)(in) + H(+)(out) = propanoyl-CoA + Na(+)(out) + CO2. Its function is as follows. Subunit of the sodium ion pump methylmalonyl-CoA decarboxylase, which converts the chemical energy of a decarboxylation reaction into an electrochemical gradient of Na(+) ions across the cytoplasmic membrane, thereby creating a sodium ion motive force that is used for ATP synthesis. The delta subunit is required for catalytic activity as well as for the proper assembly of the individual subunits to an enzyme complex. The chain is Methylmalonyl-CoA decarboxylase subunit delta from Propionigenium modestum.